The chain runs to 172 residues: S-ribosylhomocysteine lyase (172 aa).

Residues His54, His58, and Cys128 each coordinate Fe cation.

The protein belongs to the LuxS family. As to quaternary structure, homodimer. Fe cation is required as a cofactor.

The catalysed reaction is S-(5-deoxy-D-ribos-5-yl)-L-homocysteine = (S)-4,5-dihydroxypentane-2,3-dione + L-homocysteine. Involved in the synthesis of autoinducer 2 (AI-2) which is secreted by bacteria and is used to communicate both the cell density and the metabolic potential of the environment. The regulation of gene expression in response to changes in cell density is called quorum sensing. Catalyzes the transformation of S-ribosylhomocysteine (RHC) to homocysteine (HC) and 4,5-dihydroxy-2,3-pentadione (DPD). This is S-ribosylhomocysteine lyase from Vibrio atlanticus (strain LGP32) (Vibrio splendidus (strain Mel32)).